Consider the following 351-residue polypeptide: Translation initiation factor eIF2B subunit beta (351 aa).

Belongs to the eIF-2B alpha/beta/delta subunits family. In terms of assembly, component of the translation initiation factor 2B (eIF2B) complex which is a heterodecamer of two sets of five different subunits: alpha, beta, gamma, delta and epsilon. Subunits alpha, beta and delta comprise a regulatory subcomplex and subunits epsilon and gamma comprise a catalytic subcomplex. Within the complex, the hexameric regulatory complex resides at the center, with the two heterodimeric catalytic subcomplexes bound on opposite sides.

It is found in the cytoplasm. The protein localises to the cytosol. With respect to regulation, activated by the chemical integrated stress response (ISR) inhibitor ISRIB which stimulates guanine nucleotide exchange factor activity for both phosphorylated and unphosphorylated eIF2. Its function is as follows. Acts as a component of the translation initiation factor 2B (eIF2B) complex, which catalyzes the exchange of GDP for GTP on eukaryotic initiation factor 2 (eIF2) gamma subunit. Its guanine nucleotide exchange factor activity is repressed when bound to eIF2 complex phosphorylated on the alpha subunit, thereby limiting the amount of methionyl-initiator methionine tRNA available to the ribosome and consequently global translation is repressed. This is Translation initiation factor eIF2B subunit beta (EIF2B2) from Bos taurus (Bovine).